Reading from the N-terminus, the 342-residue chain is Phenylalanine--tRNA ligase alpha subunit (342 aa).

Glu-255 provides a ligand contact to Mg(2+).

This sequence belongs to the class-II aminoacyl-tRNA synthetase family. Phe-tRNA synthetase alpha subunit type 1 subfamily. In terms of assembly, tetramer of two alpha and two beta subunits. Mg(2+) serves as cofactor.

The protein localises to the cytoplasm. It catalyses the reaction tRNA(Phe) + L-phenylalanine + ATP = L-phenylalanyl-tRNA(Phe) + AMP + diphosphate + H(+). The protein is Phenylalanine--tRNA ligase alpha subunit of Pelodictyon phaeoclathratiforme (strain DSM 5477 / BU-1).